An 809-amino-acid chain; its full sequence is G-type lectin S-receptor-like serine/threonine-protein kinase At1g61480 (809 aa).

The first 24 residues, 1–24, serve as a signal peptide directing secretion; the sequence is MGKKRIMFFASLLLITIFLSFSYA. A Bulb-type lectin domain is found at 25–144; the sequence is GITRESPLSI…NSGRTLWESF (120 aa). Over 25-425 the chain is Extracellular; that stretch reads GITRESPLSI…SELGGNKRNK (401 aa). 7 N-linked (GlcNAc...) asparagine glycosylation sites follow: Asn53, Asn88, Asn94, Asn103, Asn117, Asn134, and Asn236. In terms of domain architecture, EGF-like spans 278 to 314; sequence PENSCDIYGFCGPFGICVMSVPPKCKCFKGFVPKSIE. Intrachain disulfides connect Cys282–Cys294 and Cys288–Cys302. N-linked (GlcNAc...) asparagine glycans are attached at residues Asn320 and Asn375. Residues 333-415 form the PAN domain; sequence CQGNTNGKTV…GEILSIRLAS (83 aa). Disulfide bonds link Cys368-Cys389 and Cys372-Cys378. Residues 426-446 traverse the membrane as a helical segment; sequence IIVASIVSLSLFVILAFAAFC. At 447–809 the chain is on the cytoplasmic side; the sequence is FLRYKVKHTV…EMTQSVILGR (363 aa). The Protein kinase domain maps to 496–781; sequence FSLSNKLGQG…DLTSPKQPTF (286 aa). ATP contacts are provided by residues 502–510 and Lys524; that span reads LGQGGFGSV. Residues Ser530 and Ser545 each carry the phosphoserine modification. Positions 585–602 are caM-binding; sequence RKRLEIDWPKRFNIIEGI. Residue Asp621 is the Proton acceptor of the active site. Phosphoserine occurs at positions 625 and 638. Thr655 carries the post-translational modification Phosphothreonine. A phosphoserine mark is found at Ser698 and Ser792.

Belongs to the protein kinase superfamily. Ser/Thr protein kinase family.

The protein localises to the cell membrane. It catalyses the reaction L-seryl-[protein] + ATP = O-phospho-L-seryl-[protein] + ADP + H(+). It carries out the reaction L-threonyl-[protein] + ATP = O-phospho-L-threonyl-[protein] + ADP + H(+). The protein is G-type lectin S-receptor-like serine/threonine-protein kinase At1g61480 of Arabidopsis thaliana (Mouse-ear cress).